The chain runs to 646 residues: Cytochrome b translation regulator cbp8 (646 aa).

Component of a complex, at least composed of cbp7 and cbp8.

It is found in the mitochondrion. In terms of biological role, translation factor for cob1/cytochrome b; plays a role in cob1 mRNA stabilization and required for correct folding of the protein. This chain is Cytochrome b translation regulator cbp8, found in Schizosaccharomyces pombe (strain 972 / ATCC 24843) (Fission yeast).